We begin with the raw amino-acid sequence, 167 residues long: 3-dehydroquinate dehydratase (167 aa).

Tyr-22 serves as the catalytic Proton acceptor. Substrate is bound by residues Asn-76, His-82, and Asp-89. The active-site Proton donor is His-102. Residues 103-104 (LT) and Arg-113 each bind substrate.

The protein belongs to the type-II 3-dehydroquinase family. As to quaternary structure, homododecamer.

It catalyses the reaction 3-dehydroquinate = 3-dehydroshikimate + H2O. The protein operates within metabolic intermediate biosynthesis; chorismate biosynthesis; chorismate from D-erythrose 4-phosphate and phosphoenolpyruvate: step 3/7. Its function is as follows. Catalyzes a trans-dehydration via an enolate intermediate. The sequence is that of 3-dehydroquinate dehydratase from Helicobacter pylori (strain P12).